Consider the following 421-residue polypeptide: Lipid II:glycine glycyltransferase (421 aa).

This sequence belongs to the FemABX family. In terms of assembly, monomer.

The protein localises to the cytoplasm. The catalysed reaction is beta-D-GlcNAc-(1-&gt;4)-Mur2Ac(oyl-L-Ala-D-isoglutaminyl-L-Lys-D-Ala-D-Ala)-di-trans,octa-cis-undecaprenyl diphosphate + glycyl-tRNA(Gly) = beta-D-GlcNAc-(1-&gt;4)-Mur2Ac(oyl-L-Ala-D-isoglutaminyl-L-Lys-(N(6)-Gly)-D-Ala-D-Ala)-di-trans,octa-cis-undecaprenyl diphosphate + tRNA(Gly) + H(+). In terms of biological role, catalyzes the incorporation of the first glycine of the pentaglycine interpeptide bridge, which is characteristic of the S.aureus peptidoglycan. This glycine is added to the epsilon-amino group of the L-lysine of the membrane-bound lipid II intermediate (GlcNAc-(beta-1,4)-N-acetylmuramic acid(-L-Ala-D-iGln-L-Lys-D-Ala-D-Ala)-pyrophosphoryl-undecaprenol), using glycyl-tRNA(Gly) as donor, in a ribosome-independent mechanism. The chain is Lipid II:glycine glycyltransferase (femX) from Staphylococcus aureus (strain bovine RF122 / ET3-1).